Reading from the N-terminus, the 72-residue chain is Large ribosomal subunit protein uL29 (72 aa).

The protein belongs to the universal ribosomal protein uL29 family.

This is Large ribosomal subunit protein uL29 (rpmC) from Chlamydia muridarum (strain MoPn / Nigg).